The primary structure comprises 317 residues: Olfactory receptor 8B3 (317 aa).

Topologically, residues 1–32 are extracellular; that stretch reads MISMLAGNGSSVTEFVLAGLTDRPELQLPLFY. N-linked (GlcNAc...) asparagine glycosylation occurs at Asn8. A helical membrane pass occupies residues 33-53; it reads LFLIIYIITVVGNLGLIILIG. The Cytoplasmic segment spans residues 54 to 59; that stretch reads LNPHLH. Residues 60–80 traverse the membrane as a helical segment; the sequence is TPMYYFLFNLSFIDLCYSSVF. Residues 81 to 97 are Extracellular-facing; it reads SPKMLINFVSEKNSISY. Residues 98–118 traverse the membrane as a helical segment; sequence AGCMTQLFLFLFFVISECYML. Over 119 to 136 the chain is Cytoplasmic; sequence TSMAYDRYVAICNPLLYK. The chain crosses the membrane as a helical span at residues 137 to 157; it reads VTMSPQICSVISFAAYGMGFA. Residues 158–199 are Extracellular-facing; sequence GSSAHTGCMLRLTFCNVNVINHYLCDILPLLQLSCTSTYVNE. Residues 200 to 220 traverse the membrane as a helical segment; the sequence is VVVLIVVGINITVPSFTILIS. The Cytoplasmic segment spans residues 221-242; the sequence is YVFILANILNIKSTQGRAKAFS. A helical transmembrane segment spans residues 243–263; that stretch reads TCSSHIMAISLFFGSAAFMYL. The Extracellular segment spans residues 264 to 274; it reads KYSSGSMEQGK. The chain crosses the membrane as a helical span at residues 275–294; that stretch reads ISSVFYTNVGPMLNPLIYSL. At 295–317 the chain is on the cytoplasmic side; sequence RNKDVKVALRKSLIKFREKTDFN.

Belongs to the G-protein coupled receptor 1 family.

The protein localises to the cell membrane. Its function is as follows. Odorant receptor. This is Olfactory receptor 8B3 from Mus musculus (Mouse).